A 437-amino-acid polypeptide reads, in one-letter code: Adenylosuccinate synthetase (437 aa).

GTP contacts are provided by residues 12-18 and 40-42; these read GDEGKGK and GHT. Asp13 (proton acceptor) is an active-site residue. Mg(2+)-binding residues include Asp13 and Gly40. IMP-binding positions include 13 to 16, 38 to 41, Thr128, Arg142, Gln223, Thr238, and Arg302; these read DEGK and NAGH. His41 serves as the catalytic Proton donor. 298–304 serves as a coordination point for substrate; the sequence is TTTGRRR. Residues Arg304, 330-332, and 412-414 each bind GTP; these read KLD and SLG.

The protein belongs to the adenylosuccinate synthetase family. Homodimer. The cofactor is Mg(2+).

Its subcellular location is the cytoplasm. It carries out the reaction IMP + L-aspartate + GTP = N(6)-(1,2-dicarboxyethyl)-AMP + GDP + phosphate + 2 H(+). It functions in the pathway purine metabolism; AMP biosynthesis via de novo pathway; AMP from IMP: step 1/2. Functionally, plays an important role in the de novo pathway of purine nucleotide biosynthesis. Catalyzes the first committed step in the biosynthesis of AMP from IMP. The sequence is that of Adenylosuccinate synthetase from Synechococcus sp. (strain RCC307).